We begin with the raw amino-acid sequence, 589 residues long: Arginine--tRNA ligase (589 aa).

The short motif at 132 to 142 (PNTNKPLHVGH) is the 'HIGH' region element.

This sequence belongs to the class-I aminoacyl-tRNA synthetase family. As to quaternary structure, monomer.

Its subcellular location is the cytoplasm. The catalysed reaction is tRNA(Arg) + L-arginine + ATP = L-arginyl-tRNA(Arg) + AMP + diphosphate. The sequence is that of Arginine--tRNA ligase from Treponema pallidum subsp. pallidum (strain SS14).